Reading from the N-terminus, the 73-residue chain is Large ribosomal subunit protein bL31 (73 aa).

Belongs to the bacterial ribosomal protein bL31 family. Type A subfamily. Part of the 50S ribosomal subunit.

Binds the 23S rRNA. This Brucella abortus (strain 2308) protein is Large ribosomal subunit protein bL31.